The primary structure comprises 195 residues: IMP cyclohydrolase (195 aa).

Belongs to the archaeal IMP cyclohydrolase family.

It catalyses the reaction IMP + H2O = 5-formamido-1-(5-phospho-D-ribosyl)imidazole-4-carboxamide. Its pathway is purine metabolism; IMP biosynthesis via de novo pathway; IMP from 5-formamido-1-(5-phospho-D-ribosyl)imidazole-4-carboxamide: step 1/1. In terms of biological role, catalyzes the cyclization of 5-formylamidoimidazole-4-carboxamide ribonucleotide to IMP. The polypeptide is IMP cyclohydrolase (Haloquadratum walsbyi (strain DSM 16790 / HBSQ001)).